Consider the following 533-residue polypeptide: MKQIWQALKAHQQAVEHRAILDLFTDPRRAETFSTRLGDMLFDWSKTNIDHTARDLLIDLAGAAGVAEKREAMFSGAKINETEGRAVLHTALRNMDRPVRVDGVDVTPALRETHARMQAFVRDLRSGRFTGQGGPITDVVNIGIGGSDLGPAMACLALAPYADGPRCHFVSNVDGAHIHDTLQDLDPATTLVIVASKTFTTIETMTNAETAKRWMAKRVSDPAAQFAAVSTAADKTAAFGIDASRVFGFEDWVGGRYSMWGPIGLALMIAIGPEAFDAFLAGGAEMDRHFREAPFAENLPVLLALVGLWHNQICGHATRAVLPYDQRLARLPAYLQQLEMESNGKRVAMDGHELTHHSGPIVWGEPGTNGQHAFYQLIHQGSRIVPCEFLVAREGHEPDLAHQHLLLVSNCLAQSEALLRGRSVEEARAILGKKGLTGSELERQARHRVFPGNRPSTVLAYEKLTPATLGRIVALYEHRVFVEGVILGINSYDQWGVELGKELALALQPMLEGRAGTEGKDGSTAQLVAYLRR.

Glu341 serves as the catalytic Proton donor. Residues His372 and Lys501 contribute to the active site.

This sequence belongs to the GPI family.

The protein localises to the cytoplasm. The enzyme catalyses alpha-D-glucose 6-phosphate = beta-D-fructose 6-phosphate. It functions in the pathway carbohydrate biosynthesis; gluconeogenesis. It participates in carbohydrate degradation; glycolysis; D-glyceraldehyde 3-phosphate and glycerone phosphate from D-glucose: step 2/4. Functionally, catalyzes the reversible isomerization of glucose-6-phosphate to fructose-6-phosphate. This is Glucose-6-phosphate isomerase from Cereibacter sphaeroides (strain ATCC 17023 / DSM 158 / JCM 6121 / CCUG 31486 / LMG 2827 / NBRC 12203 / NCIMB 8253 / ATH 2.4.1.) (Rhodobacter sphaeroides).